Here is a 79-residue protein sequence, read N- to C-terminus: Short neurotoxin 3 (79 aa).

A signal peptide spans 1 to 21; it reads MKTLLLTLVMVTIMCLDLGYT. Cystine bridges form between C24/C41, C34/C59, C63/C71, and C72/C77.

It belongs to the three-finger toxin family. Short-chain subfamily. Type III alpha-neurotoxin sub-subfamily. In terms of tissue distribution, expressed by the venom gland.

It localises to the secreted. Functionally, binds with high affinity to muscle nicotinic acetylcholine receptor (nAChR) and hinders acetylcholine binding to the receptor, thereby impairing neuromuscular transmission. Competes with the binding of alpha-bungarotoxin on muscle AChR (from Torpedo) with an IC(50) of 0.30 uM. Causes muscle paralysis, spasms and increased respiration. This is Short neurotoxin 3 from Pseudonaja textilis (Eastern brown snake).